Reading from the N-terminus, the 350-residue chain is UDP-N-acetylglucosamine--N-acetylmuramyl-(pentapeptide) pyrophosphoryl-undecaprenol N-acetylglucosamine transferase (350 aa).

UDP-N-acetyl-alpha-D-glucosamine-binding positions include 9–11, N123, R159, S181, and Q281; that span reads TGG.

This sequence belongs to the glycosyltransferase 28 family. MurG subfamily.

The protein localises to the cell inner membrane. The enzyme catalyses di-trans,octa-cis-undecaprenyl diphospho-N-acetyl-alpha-D-muramoyl-L-alanyl-D-glutamyl-meso-2,6-diaminopimeloyl-D-alanyl-D-alanine + UDP-N-acetyl-alpha-D-glucosamine = di-trans,octa-cis-undecaprenyl diphospho-[N-acetyl-alpha-D-glucosaminyl-(1-&gt;4)]-N-acetyl-alpha-D-muramoyl-L-alanyl-D-glutamyl-meso-2,6-diaminopimeloyl-D-alanyl-D-alanine + UDP + H(+). It functions in the pathway cell wall biogenesis; peptidoglycan biosynthesis. Cell wall formation. Catalyzes the transfer of a GlcNAc subunit on undecaprenyl-pyrophosphoryl-MurNAc-pentapeptide (lipid intermediate I) to form undecaprenyl-pyrophosphoryl-MurNAc-(pentapeptide)GlcNAc (lipid intermediate II). The sequence is that of UDP-N-acetylglucosamine--N-acetylmuramyl-(pentapeptide) pyrophosphoryl-undecaprenol N-acetylglucosamine transferase from Helicobacter hepaticus (strain ATCC 51449 / 3B1).